A 1657-amino-acid chain; its full sequence is Putative serine/threonine-protein kinase/receptor R826 (1657 aa).

Residues 1–23 (MRLNSQIVFCIVVVISCLSMIEC) form the signal peptide. N153, N178, N238, N255, N352, N454, N476, N494, and N596 each carry an N-linked (GlcNAc...) asparagine; by host glycan. Residues 742–762 (IILAVVIPIAFIIVCIICILV) traverse the membrane as a helical segment. The region spanning 786-1049 (LELGEQLGTG…EIMTRLSNLM (264 aa)) is the Protein kinase 1 domain. ATP-binding positions include 792-800 (LGTGAFGEV) and K813. Residue D909 is the Proton acceptor of the active site. Residues 1089–1115 (VQNSYNRTDSYDLGSNNSHSSITSDTN) are disordered. In terms of domain architecture, Guanylate cyclase spans 1134-1277 (VVVFTDIISA…PTVTTAAAVT (144 aa)). Residues 1399-1651 (IKMGEQIGLG…DDVIIVLAKF (253 aa)) form the Protein kinase 2 domain. ATP contacts are provided by residues 1405–1413 (IGLGSYGVV) and K1426. Residue D1522 is the Proton acceptor of the active site.

The protein localises to the membrane. It catalyses the reaction L-seryl-[protein] + ATP = O-phospho-L-seryl-[protein] + ADP + H(+). The catalysed reaction is L-threonyl-[protein] + ATP = O-phospho-L-threonyl-[protein] + ADP + H(+). This is Putative serine/threonine-protein kinase/receptor R826 from Acanthamoeba polyphaga mimivirus (APMV).